The primary structure comprises 387 residues: Glutamate N-acetyltransferase (387 aa).

Substrate-binding residues include Thr-140, Lys-162, Thr-173, Glu-257, Asn-382, and Thr-387. Thr-173 serves as the catalytic Nucleophile.

It belongs to the ArgJ family. In terms of assembly, heterotetramer of two alpha and two beta chains.

It is found in the cytoplasm. The catalysed reaction is N(2)-acetyl-L-ornithine + L-glutamate = N-acetyl-L-glutamate + L-ornithine. The protein operates within amino-acid biosynthesis; L-arginine biosynthesis; L-ornithine and N-acetyl-L-glutamate from L-glutamate and N(2)-acetyl-L-ornithine (cyclic): step 1/1. Catalyzes the transfer of the acetyl group from N(2)-acetylornithine to glutamate, forming N-acetylglutamate and L-ornithine. The chain is Glutamate N-acetyltransferase from Methanopyrus kandleri (strain AV19 / DSM 6324 / JCM 9639 / NBRC 100938).